A 486-amino-acid chain; its full sequence is Replication factor C large subunit (486 aa).

Residue 46 to 53 (GPPGSGKT) participates in ATP binding. The interval 419-486 (VKKETPKKTE…KKQATLDSFF (68 aa)) is disordered. 2 stretches are compositionally biased toward basic and acidic residues: residues 420-432 (KKET…KPKE) and 442-480 (RISE…KKQA).

This sequence belongs to the activator 1 small subunits family. RfcL subfamily. As to quaternary structure, heteromultimer composed of small subunits (RfcS) and large subunits (RfcL).

Its function is as follows. Part of the RFC clamp loader complex which loads the PCNA sliding clamp onto DNA. In Methanococcus maripaludis (strain DSM 14266 / JCM 13030 / NBRC 101832 / S2 / LL), this protein is Replication factor C large subunit.